A 370-amino-acid polypeptide reads, in one-letter code: Putative F-box protein At1g46984 (370 aa).

The F-box domain maps to tyrosine 18–phenylalanine 64.

The chain is Putative F-box protein At1g46984 from Arabidopsis thaliana (Mouse-ear cress).